The following is a 679-amino-acid chain: E3 ubiquitin ligase RNF157 (679 aa).

The N-myristoyl glycine moiety is linked to residue Gly2. Residues 277–316 (CVVCLSDVRDTLILPCRHLCLCNTCADTLRYQANNCPICR) form an RING-type zinc finger. Residues 329-332 (RKKL) carry the D-box 1 motif. 2 stretches are compositionally biased toward polar residues: residues 339 to 349 (SFNPIISSQTS) and 478 to 537 (ESEN…SMSG). Disordered regions lie at residues 339–362 (SFNP…NIPP), 416–604 (LDRL…TQEG), and 650–679 (VSRN…PLAV). The segment covering 585-598 (QDAEGNDVIEEEDG) has biased composition (acidic residues). Positions 656–659 (RRRL) match the D-box 2 motif. A phosphoserine mark is found at Ser660, Ser661, Ser662, and Ser663.

As to quaternary structure, interacts with APBB1. Interacts with CHD1; CHD1-binding controls RNF157 stability. Interacts with ATRN, MEGF8, TECR, MSI2, PLRG1, BYSL, MTERF3, PSMA1, MRPS18B, PRPF4, FASTKD2, SLC25A1, SMU1, CNOT9, MRPS2, MAGT1, FXR2, EMD, PSMD8, HDAC1, RAN, HSD17B12, TXNDC5 and MRPL19. Post-translationally, phosphorylation at Ser-660, Ser-661, Ser-662 and Ser-663 downstream of the PI3K and MAPK pathways influences the E3 ligase activity and stability of RNF157 during the cell cycle in an anaphase-promoting complex/cyclosome-CDH1-dependent manner.

The protein localises to the cytoplasm. The catalysed reaction is S-ubiquitinyl-[E2 ubiquitin-conjugating enzyme]-L-cysteine + [acceptor protein]-L-lysine = [E2 ubiquitin-conjugating enzyme]-L-cysteine + N(6)-ubiquitinyl-[acceptor protein]-L-lysine.. Functionally, E3 ubiquitin ligase that ubiquitinates APBB1 for its degradation by the proteasome and thus prevents apoptosis and promotes survival of neurons. Has a dual role in neurons as it is also required for dendrite growth and maintenance for which its ligase activity is not critical. May act as a scaffold molecule to regulate this process. Acts as a downstream effector of the interconnected PI3K and MAPK signaling pathways and thus participates in the regulation of the cell cycle. The chain is E3 ubiquitin ligase RNF157 (RNF157) from Homo sapiens (Human).